Consider the following 425-residue polypeptide: Ribulose bisphosphate carboxylase/oxygenase activase B, chloroplastic (425 aa).

The N-terminal 43 residues, 1–43 (MASAFSSTVGAPASTPTIFLGKKVKNYYHGGNKMKSRVVRVMA), are a transit peptide targeting the chloroplast. ATP is bound at residue 153–160 (GGKGQGKS).

Belongs to the RuBisCO activase family.

It is found in the plastid. Its subcellular location is the chloroplast stroma. Its function is as follows. Activation of RuBisCO (ribulose-1,5-bisphosphate carboxylase/oxygenase; EC 4.1.1.39) involves the ATP-dependent carboxylation of the epsilon-amino group of lysine leading to a carbamate structure. The sequence is that of Ribulose bisphosphate carboxylase/oxygenase activase B, chloroplastic (RCAB) from Hordeum vulgare (Barley).